The primary structure comprises 741 residues: Zinc finger and BTB domain-containing protein 20 (741 aa).

The segment covering 1-17 has biased composition (basic and acidic residues); that stretch reads MLERKKPKTAENQKASE. Residues 1–28 are disordered; it reads MLERKKPKTAENQKASEENEITQPGGSS. Residues 104–167 form the BTB domain; the sequence is CDVTVRIHGS…MYSGVLRVSQ (64 aa). The segment at 203–235 is disordered; the sequence is GIQDSGQDTPRGTPESGTSGQSSDTESGYLQSH. Over residues 206–235 the composition is skewed to polar residues; sequence DSGQDTPRGTPESGTSGQSSDTESGYLQSH. The residue at position 211 (Thr211) is a Phosphothreonine. Lys330 participates in a covalent cross-link: Glycyl lysine isopeptide (Lys-Gly) (interchain with G-Cter in SUMO1); alternate. Lys330 participates in a covalent cross-link: Glycyl lysine isopeptide (Lys-Gly) (interchain with G-Cter in SUMO2); alternate. The tract at residues 350–440 is disordered; sequence RNESEECTED…SSPERSNESE (91 aa). Ser353 carries the phosphoserine modification. Residues 354-367 are compositionally biased toward acidic residues; the sequence is EECTEDTDQAEGTE. Position 357 is a phosphothreonine (Thr357). Lys371 participates in a covalent cross-link: Glycyl lysine isopeptide (Lys-Gly) (interchain with G-Cter in SUMO2). The segment covering 404 to 423 has biased composition (low complexity); sequence AEPAQPEQAAEAPAESSAQP. 4 consecutive C2H2-type zinc fingers follow at residues 578-600, 606-628, 634-656, and 662-684; these read YECT…MFVH, HQCS…MVTH, YQCS…MRLH, and YECY…VALH. A phosphothreonine mark is found at Thr690 and Thr695. A C2H2-type 5 zinc finger spans residues 715–737; sequence YVCSVCPAKFDQIEQFNDHMRMH. Lys723 participates in a covalent cross-link: Glycyl lysine isopeptide (Lys-Gly) (interchain with G-Cter in SUMO2).

In terms of assembly, can homodimerize. Binds to DNA. In terms of processing, sumoylated with SUMO1. As to expression, specifically expressed in early hippocampal neurons, cerebellar granule cells and gliogenic progenitors as well as in differentiated glia. Expressed in adult and aged myogenic satellite cells.

It localises to the nucleus. Its function is as follows. May be a transcription factor that may be involved in hematopoiesis, oncogenesis, and immune responses. Plays a role in postnatal myogenesis, may be involved in the regulation of satellite cells self-renewal. The chain is Zinc finger and BTB domain-containing protein 20 (Zbtb20) from Mus musculus (Mouse).